The primary structure comprises 165 residues: MSHPALTQLRALRYFDAIPALEPHLLDWLLLEDSMTKRFEQQGKRVSVTLIREAFVGQSEVEEASGLLPSESRYWLREILLCADGEPWLAGRTVVPESTLCGPEQVLQHLGKTPLGRYLFTSSTLTRDFIEIGRDATLWGRRSRLRLSGKPLLLTELFLPASPLY.

Substrate is bound by residues methionine 35, arginine 77, leucine 115, and glutamate 156.

It belongs to the UbiC family. In terms of assembly, monomer.

The protein resides in the cytoplasm. It catalyses the reaction chorismate = 4-hydroxybenzoate + pyruvate. It functions in the pathway cofactor biosynthesis; ubiquinone biosynthesis. In terms of biological role, removes the pyruvyl group from chorismate, with concomitant aromatization of the ring, to provide 4-hydroxybenzoate (4HB) for the ubiquinone pathway. The sequence is that of Chorismate pyruvate-lyase from Salmonella enteritidis PT4 (strain P125109).